A 182-amino-acid polypeptide reads, in one-letter code: Probable RNA 2'-phosphotransferase (182 aa).

Belongs to the KptA/TPT1 family.

Its function is as follows. Removes the 2'-phosphate from RNA via an intermediate in which the phosphate is ADP-ribosylated by NAD followed by a presumed transesterification to release the RNA and generate ADP-ribose 1''-2''-cyclic phosphate (APPR&gt;P). May function as an ADP-ribosylase. The sequence is that of Probable RNA 2'-phosphotransferase from Flavobacterium johnsoniae (strain ATCC 17061 / DSM 2064 / JCM 8514 / BCRC 14874 / CCUG 350202 / NBRC 14942 / NCIMB 11054 / UW101) (Cytophaga johnsonae).